A 206-amino-acid polypeptide reads, in one-letter code: Nucleoside triphosphate pyrophosphatase (206 aa).

The Proton acceptor role is filled by Asp78.

The protein belongs to the Maf family. A divalent metal cation serves as cofactor.

The protein localises to the cytoplasm. The catalysed reaction is a ribonucleoside 5'-triphosphate + H2O = a ribonucleoside 5'-phosphate + diphosphate + H(+). The enzyme catalyses a 2'-deoxyribonucleoside 5'-triphosphate + H2O = a 2'-deoxyribonucleoside 5'-phosphate + diphosphate + H(+). In terms of biological role, nucleoside triphosphate pyrophosphatase. May have a dual role in cell division arrest and in preventing the incorporation of modified nucleotides into cellular nucleic acids. The polypeptide is Nucleoside triphosphate pyrophosphatase (Prochlorococcus marinus (strain MIT 9312)).